We begin with the raw amino-acid sequence, 337 residues long: 4-hydroxythreonine-4-phosphate dehydrogenase (337 aa).

Substrate contacts are provided by H139 and T140. A divalent metal cation contacts are provided by H173, H218, and H273. The substrate site is built by K281, N290, and R299.

The protein belongs to the PdxA family. Homodimer. It depends on Zn(2+) as a cofactor. The cofactor is Mg(2+). Requires Co(2+) as cofactor.

The protein localises to the cytoplasm. The enzyme catalyses 4-(phosphooxy)-L-threonine + NAD(+) = 3-amino-2-oxopropyl phosphate + CO2 + NADH. It participates in cofactor biosynthesis; pyridoxine 5'-phosphate biosynthesis; pyridoxine 5'-phosphate from D-erythrose 4-phosphate: step 4/5. Functionally, catalyzes the NAD(P)-dependent oxidation of 4-(phosphooxy)-L-threonine (HTP) into 2-amino-3-oxo-4-(phosphooxy)butyric acid which spontaneously decarboxylates to form 3-amino-2-oxopropyl phosphate (AHAP). The polypeptide is 4-hydroxythreonine-4-phosphate dehydrogenase (Rhodopseudomonas palustris (strain ATCC BAA-98 / CGA009)).